A 337-amino-acid chain; its full sequence is Glyceraldehyde-3-phosphate dehydrogenase (337 aa).

NAD(+)-binding positions include 17–18 (RI), aspartate 39, lysine 83, and serine 125. Residues 156-158 (SCT), threonine 187, arginine 202, 215-216 (TG), and arginine 238 contribute to the D-glyceraldehyde 3-phosphate site. Residue cysteine 157 is the Nucleophile of the active site. Position 319 (asparagine 319) interacts with NAD(+).

The protein belongs to the glyceraldehyde-3-phosphate dehydrogenase family. As to quaternary structure, homotetramer.

It is found in the cytoplasm. It catalyses the reaction D-glyceraldehyde 3-phosphate + phosphate + NAD(+) = (2R)-3-phospho-glyceroyl phosphate + NADH + H(+). Its pathway is carbohydrate degradation; glycolysis; pyruvate from D-glyceraldehyde 3-phosphate: step 1/5. Catalyzes the oxidative phosphorylation of glyceraldehyde 3-phosphate (G3P) to 1,3-bisphosphoglycerate (BPG) using the cofactor NAD. The first reaction step involves the formation of a hemiacetal intermediate between G3P and a cysteine residue, and this hemiacetal intermediate is then oxidized to a thioester, with concomitant reduction of NAD to NADH. The reduced NADH is then exchanged with the second NAD, and the thioester is attacked by a nucleophilic inorganic phosphate to produce BPG. The protein is Glyceraldehyde-3-phosphate dehydrogenase (gapA) of Mycoplasma genitalium (strain ATCC 33530 / DSM 19775 / NCTC 10195 / G37) (Mycoplasmoides genitalium).